We begin with the raw amino-acid sequence, 257 residues long: Gasdermin-like protein rcd-1-1 (257 aa).

It belongs to the gasdermin family. As to quaternary structure, heterooligomer; the heterooligomer with rcd-1-2 forms a ring-shaped pore complex when inserted in the membrane.

It is found in the cytoplasm. Its subcellular location is the cell membrane. Gasdermin-like protein involved in heterokaryon incompatibility, a process that ensures that during spontaneous vegetative cell fusion, only compatible cells from the same colony survive (non-self-recognition). In N.crassa, the rcd-1 locus exists as 2 incompatible alleles, rcd-1-1 (this entry) and rcd-1-2 (AC P0DW10). During the allorecognition process, forms a heterooligomer with rcd-1-2, thereby forming a functional gasdermin-like complex that binds to membranes and forms pores, triggering cell death. Binds negatively charged phospholipids, such as cardiolipin and phosphatidylserine. Also binds to phosphoinositides, preferentially to phosphatidylinositol-3-phosphate (PtdIns-3-P), PtdIns-5-P and PtdIns-3,5-P2. This chain is Gasdermin-like protein rcd-1-1, found in Neurospora crassa (strain ATCC 24698 / 74-OR23-1A / CBS 708.71 / DSM 1257 / FGSC 987).